The following is a 289-amino-acid chain: Right origin-binding protein (289 aa).

One can recognise an HTH araC/xylS-type domain in the interval 8–106 (RDLLIWLEGH…AQTPALYRRS (99 aa)). 2 DNA-binding regions (H-T-H motif) span residues 25 to 46 (DNVA…KDVT) and 73 to 96 (ILDI…KKQF).

Its function is as follows. Transcriptional regulator. Binds to the right arm of the replication origin oriC of the chromosome. Rob binding may influence the formation of the nucleoprotein structure, required for oriC function in the initiation of replication. The polypeptide is Right origin-binding protein (rob) (Escherichia coli O157:H7).